The sequence spans 286 residues: Probable protein VP2 (286 aa).

2 disordered regions span residues 67–108 (LPAA…GPED) and 184–286 (QAAR…GGGI). Over residues 222 to 241 (GKTRSRRKAGRKAQRKRRRP) the composition is skewed to basic residues. Residues 242-265 (SPSSSSSSCSNSESWESNSDSCST) show a composition bias toward low complexity.

In terms of processing, phosphorylated at C-terminal serines.

The polypeptide is Probable protein VP2 (Homo sapiens (Human)).